We begin with the raw amino-acid sequence, 546 residues long: Thermolysin (546 aa).

Positions 1–25 (MDKRAMLGAIGLAFGLMAWPFGASA) are cleaved as a signal peptide. The propeptide at 26–228 (KEKSMVWNEQ…EAKPGGGQPV (203 aa)) is activation peptide. 4 residues coordinate Ca(2+): aspartate 287, aspartate 289, glutamine 291, and aspartate 368. Histidine 372 serves as a coordination point for Zn(2+). Glutamate 373 is a catalytic residue. Histidine 376 and glutamate 396 together coordinate Zn(2+). Ca(2+) is bound by residues asparagine 413, aspartate 415, glutamate 417, glutamate 420, tyrosine 423, threonine 424, isoleucine 427, and aspartate 430. Histidine 461 functions as the Proton donor in the catalytic mechanism.

The protein belongs to the peptidase M4 family. It depends on Ca(2+) as a cofactor. The cofactor is Zn(2+).

Its subcellular location is the secreted. It carries out the reaction Preferential cleavage: Xaa-|-Leu &gt; Xaa-|-Phe.. Functionally, extracellular zinc metalloprotease. Has collagenase activity. This Bacillus sp. (strain EA1) protein is Thermolysin (npr).